A 405-amino-acid polypeptide reads, in one-letter code: Imidazolonepropionase (405 aa).

Residues His72 and His74 each coordinate Fe(3+). His72 and His74 together coordinate Zn(2+). The 4-imidazolone-5-propanoate site is built by Arg81, Tyr144, and His177. Tyr144 lines the N-formimidoyl-L-glutamate pocket. Residue His242 participates in Fe(3+) binding. Residue His242 participates in Zn(2+) binding. Gln245 contributes to the 4-imidazolone-5-propanoate binding site. Asp317 is a Fe(3+) binding site. Position 317 (Asp317) interacts with Zn(2+). Asn319 and Gly321 together coordinate N-formimidoyl-L-glutamate. Thr322 is a 4-imidazolone-5-propanoate binding site.

The protein belongs to the metallo-dependent hydrolases superfamily. HutI family. The cofactor is Zn(2+). Fe(3+) serves as cofactor.

It localises to the cytoplasm. It carries out the reaction 4-imidazolone-5-propanoate + H2O = N-formimidoyl-L-glutamate. Its pathway is amino-acid degradation; L-histidine degradation into L-glutamate; N-formimidoyl-L-glutamate from L-histidine: step 3/3. Functionally, catalyzes the hydrolytic cleavage of the carbon-nitrogen bond in imidazolone-5-propanoate to yield N-formimidoyl-L-glutamate. It is the third step in the universal histidine degradation pathway. The chain is Imidazolonepropionase from Erwinia tasmaniensis (strain DSM 17950 / CFBP 7177 / CIP 109463 / NCPPB 4357 / Et1/99).